The following is a 354-amino-acid chain: Putative F-box/kelch-repeat protein At5g03000 (354 aa).

The F-box domain maps to 37–86 (PTVFSSLPDELILNCLARVSRFYRPSLSLVNKEFQSLIASPDLEATRSRI). Kelch repeat units lie at residues 143–189 (EIYI…VIDG) and 190–236 (KIYV…FPGK).

The protein is Putative F-box/kelch-repeat protein At5g03000 of Arabidopsis thaliana (Mouse-ear cress).